Here is a 494-residue protein sequence, read N- to C-terminus: MAARTDNSIVVNAPFELVWDVTNDIEAWPELFSEYAEAEILRQDGDGFDFRLKTRPDANGRVWEWVSHRVPDKGSRTVRAHRVETGPFAYMNLHWTYRAVAGGTEMRWVQEFDMKPGAPFDNAHMTAHLNTTTRANMERIKKIIEDRHREGQRTPASVLPTELHAQQLLLLAASGRLARIVHVLTELRIADLLADGPRHVAELAKETDTHELSLYRVLRSAASVGVFAEGPVRTFSATPLSDGLRTGNPDGVLPLVKYNNMELTRRPYDEIMHSVRTGEPAFRRVFGSSFFEHLEANPEAGEFFERFMAHWSRRLVLDGLADQGMERFSRIADLGGGDGWFLAQILRRHPHATGLLMDLPRVAASAGPVLEEAKVADRVTVLPGDFFTDPVPTGYDAYLFKGVLHNWSDERAVTVLRRVREAIGDDDARLLIFDQVMAPENEWDHAKLLDIDMLVLFGGRERVLAEWRQLLLEADFDIVNTPSHTWTTLECRPV.

Positions 11 to 140 are polyketide cyclase; the sequence is VNAPFELVWD…TTTRANMERI (130 aa). The active-site Proton acceptor; for cyclase activity is the serine 67. Active-site proton donor; for cyclase activity residues include arginine 69 and arginine 82. The interval 169–494 is methyltransferase; sequence LLLAASGRLA…TWTTLECRPV (326 aa). S-adenosyl-L-methionine contacts are provided by residues aspartate 358 and 384-386; that span reads GDF. Residue histidine 405 is the Proton acceptor; for methyltransferase activity of the active site.

It in the C-terminal section; belongs to the class I-like SAM-binding methyltransferase superfamily. Cation-independent O-methyltransferase family. In terms of assembly, the tetracenomycin polyketide synthase (TCM PKS) is composed of a ketosynthase complex (TcmKL), an acyl carrier protein (TcmM), a cyclase (TcmN) and a probable second cyclase (TcmJ). TcmN is a homodimer in solution.

It carries out the reaction 10 malonyl-CoA + 8 H(+) = tetracenomycin F2 + 10 CO2 + 10 CoA + 2 H2O. It functions in the pathway antibiotic biosynthesis; tetracenomycin C biosynthesis. Its function is as follows. Involved in the biosynthesis of tetracenomycin C (TCM C). Part of a type II polyketide synthase (PKS) that catalyzes the synthesis of tetracenomycin F2 (TCM F2), a precursor of TCM C, from malonyl-CoA. The TcmN N-terminal domain, when coupled with the other components of the PKS, catalyzes the cyclization and aromatization of the linear polyketide intermediate. Catalyzes the cyclization of the first and second rings. In addition, the C-terminal domain acts as a methyltransferase. It catalyzes the specific O-methylation of tetracenomycin D3 (TCM D3) to TCM B3, using S-adenosyl-L-methionine as the methyl donor. The sequence is that of Tetracenomycin biosynthesis bifunctional cyclase/O-methyl transferase TcmN from Streptomyces glaucescens.